The following is a 90-amino-acid chain: Keratin-associated protein 19-1 (90 aa).

Positions 5 to 84 (GSYYGGLGYS…CCRPSYNGGY (80 aa)) are 26 X 2 AA repeats of G-[YCGS].

Belongs to the KRTAP type 19 family. Interacts with hair keratins. Detected in the upper portion of the hair cortex.

Its function is as follows. In the hair cortex, hair keratin intermediate filaments are embedded in an interfilamentous matrix, consisting of hair keratin-associated proteins (KRTAP), which are essential for the formation of a rigid and resistant hair shaft through their extensive disulfide bond cross-linking with abundant cysteine residues of hair keratins. The matrix proteins include the high-sulfur and high-glycine-tyrosine keratins. This chain is Keratin-associated protein 19-1 (KRTAP19-1), found in Homo sapiens (Human).